The primary structure comprises 192 residues: Type-4 uracil-DNA glycosylase (192 aa).

[4Fe-4S] cluster is bound by residues C18 and C21. Residues 45-47 (GEG), F59, and N85 each bind uracil. 2 residues coordinate [4Fe-4S] cluster: C89 and C105. Uracil is bound at residue H161.

This sequence belongs to the uracil-DNA glycosylase (UDG) superfamily. Type 4 (UDGa) family.

The catalysed reaction is Hydrolyzes single-stranded DNA or mismatched double-stranded DNA and polynucleotides, releasing free uracil.. Removes uracil bases that are present in DNA as a result of either deamination of cytosine or misincorporation of dUMP instead of dTMP. Can remove uracil from double-stranded DNA containing either a U/G or U/A base pair as well as from single-stranded DNA. The sequence is that of Type-4 uracil-DNA glycosylase from Thermotoga maritima (strain ATCC 43589 / DSM 3109 / JCM 10099 / NBRC 100826 / MSB8).